The following is a 501-amino-acid chain: Amidophosphoribosyltransferase (501 aa).

The active-site Nucleophile is the C2. The 233-residue stretch at 2–234 (CGIVGIVGKS…PGEAVYITEE (233 aa)) folds into the Glutamine amidotransferase type-2 domain. T303, D365, and D366 together coordinate Mg(2+).

The protein in the C-terminal section; belongs to the purine/pyrimidine phosphoribosyltransferase family. Mg(2+) serves as cofactor.

It carries out the reaction 5-phospho-beta-D-ribosylamine + L-glutamate + diphosphate = 5-phospho-alpha-D-ribose 1-diphosphate + L-glutamine + H2O. It participates in purine metabolism; IMP biosynthesis via de novo pathway; N(1)-(5-phospho-D-ribosyl)glycinamide from 5-phospho-alpha-D-ribose 1-diphosphate: step 1/2. Functionally, catalyzes the formation of phosphoribosylamine from phosphoribosylpyrophosphate (PRPP) and glutamine. The chain is Amidophosphoribosyltransferase from Pseudomonas aeruginosa (strain ATCC 15692 / DSM 22644 / CIP 104116 / JCM 14847 / LMG 12228 / 1C / PRS 101 / PAO1).